The following is a 2364-amino-acid chain: Cytotoxin-L (2364 aa).

The four-helical bundle stretch occupies residues 1–91 (MSLVNKAQLQ…EVLELKNNSL (91 aa)). The region spanning 96–468 (KNLHFIWIGG…APDVRSTINL (373 aa)) is the GT44 domain. Residues 96–468 (KNLHFIWIGG…APDVRSTINL (373 aa)) form a glucosyltransferase region region. UDP-alpha-D-glucose-binding positions include 101-103 (IWI), asparagine 139, 265-270 (LAAASD), and 286-288 (DVD). Mg(2+)-binding residues include aspartate 288, glutamate 515, and serine 518. 518 to 520 (SLW) contributes to the UDP-alpha-D-glucose binding site. Positions 544-799 (GEDDILDFSQ…KSKNLHELST (256 aa)) are autoprocessing region. Glutamate 545 and aspartate 546 together coordinate Zn(2+). Residues 567-774 (SSSMRTPNKE…EESIIKDISS (208 aa)) form the Peptidase C80 domain. Residues tyrosine 577, lysine 600, and lysine 647 each coordinate 1D-myo-inositol hexakisphosphate. Residue histidine 653 coordinates Zn(2+). The For protease activity role is filled by histidine 653. The active-site Nucleophile; for protease activity is the cysteine 698. Histidine 757 provides a ligand contact to Zn(2+). 3 residues coordinate 1D-myo-inositol hexakisphosphate: lysine 764, lysine 775, and lysine 792. Residues 800 to 1500 (LLQEIKNNSN…ESIIRNIYMP (701 aa)) are translocation region. 5 interaction with host SEMA6A and SEMA6B regions span residues 1433 to 1438 (CIKLIE), 1466 to 1471 (DNETKY), 1484 to 1495 (FTAEFSNESIIR), 1504 to 1511 (NLFIYSSK), and 1596 to 1601 (YNNLDP). 19 Cell wall-binding repeats span residues 1833–1852 (VSGL…PKNN), 1854–1873 (ITGF…TKSG), 1876–1895 (SIGE…QGIL), 1926–1945 (FIGK…NYRA), 1946–1965 (AVEW…KTGE), 1967–1986 (LKGL…NGIM), 1987–2006 (QTGF…DGVM), 2007–2026 (QVGY…NGER), 2057–2076 (YNGI…SNTA), 2077–2097 (VVGW…NTAE), 2099–2118 (CIGL…NGIR), 2119–2138 (QLGF…SGKI), 2139–2158 (ELGY…SGLV), 2209–2224 (ETGW…YFDP), 2227–2249 (KKAY…NGIM), 2250–2269 (KTGL…DGKM), 2270–2289 (QFGY…DGKM), 2320–2339 (YTGW…EYIA), and 2340–2359 (ATSS…DTAE). The tract at residues 1835 to 2364 (GLIYINDSLY…PDTAELVVSE (530 aa)) is receptor-binding (CROPS) region.

It belongs to the clostridial glucosylating toxin (LCGT) family. As to quaternary structure, homomultimer; forms an inactive homomultimer at pH 8, which dissociates at pH 4, leading to cytotoxicity. Interacts with host SEMA6A; interaction promotes toxin entry into host cell. Interacts with host SEMA6B; interaction promotes toxin entry into host cell. The cofactor is Zn(2+). Requires Mn(2+) as cofactor. Mg(2+) is required as a cofactor. Post-translationally, undergoes autocatalytic cleavage to release the N-terminal part (Glucosyltransferase TcsL), which constitutes the active part of the toxin, in the host cytosol. 1D-myo-inositol hexakisphosphate-binding (InsP6) activates the peptidase C80 domain and promotes autoprocessing.

Its subcellular location is the secreted. The protein localises to the host endosome membrane. The protein resides in the host cytoplasm. It is found in the host cytosol. It localises to the host cell membrane. It carries out the reaction L-threonyl-[protein] + UDP-alpha-D-glucose = 3-O-(alpha-D-glucosyl)-L-threonyl-[protein] + UDP + H(+). Its activity is regulated as follows. Protease activity is activated upon binding to 1D-myo-inositol hexakisphosphate (InsP6), which induces conformational reorganization. In terms of biological role, precursor of a cytotoxin that targets the vascular endothelium, inducing an anti-inflammatory effect and resulting in lethal toxic shock syndrome. TcsL constitutes the main toxin that mediates the pathology of P.sordellii infection, an anaerobic Gram-positive bacterium found in soil and in the gastrointestinal and vaginal tracts of animals and humans; although the majority of carriers are asymptomatic, pathogenic P.sordellii infections arise rapidly and are highly lethal. This form constitutes the precursor of the toxin: it enters into host cells and mediates autoprocessing to release the active toxin (Glucosyltransferase TcsL) into the host cytosol. Targets vascular endothelium by binding to the semaphorin proteins SEMA6A and SEMA6B, and enters host cells via clathrin-mediated endocytosis. Once entered into host cells, acidification in the endosome promotes the membrane insertion of the translocation region and formation of a pore, leading to translocation of the GT44 and peptidase C80 domains across the endosomal membrane. This activates the peptidase C80 domain and autocatalytic processing, releasing the N-terminal part (Glucosyltransferase TcsL), which constitutes the active part of the toxin, in the cytosol. Functionally, active form of the toxin, which is released into the host cytosol following autoprocessing and inactivates small GTPases. Acts by mediating monoglucosylation of small GTPases of the Ras (H-Ras/HRAS, K-Ras/KRAS and N-Ras/NRAS) family in host cells at the conserved threonine residue located in the switch I region ('Thr-37/35'), using UDP-alpha-D-glucose as the sugar donor. Does not catalyze monoglucosylation of Ral/RALA. Also able to catalyze monoglucosylation of some members of the Rho family (Rac1 and Rap2A), but with less efficiency than with Ras proteins. Monoglucosylation of host small GTPases completely prevents the recognition of the downstream effector, blocking the GTPases in their inactive form and leading to apoptosis. Induces an anti-inflammatory effect, mainly by inactivating Ras proteins which results in blockage of the cell cycle and killing of immune cells. The absence or moderate local inflammatory response allows C.sordellii spreading in deep tissues, production of toxin which is released in the general circulation and causes a toxic shock syndrome. The chain is Cytotoxin-L from Paraclostridium sordellii (Clostridium sordellii).